We begin with the raw amino-acid sequence, 1002 residues long: ATP-dependent DNA helicase MPH1 (1002 aa).

In terms of domain architecture, Helicase ATP-binding spans 108–275 (IVRCALFENV…EVVNNLHISK (168 aa)). 121–128 (IPTGTGKT) lines the ATP pocket. The short motif at 223–226 (DEAH) is the DEAH box element. Positions 506 to 669 (DEETYIRKNK…ALEYTKSDRI (164 aa)) constitute a Helicase C-terminal domain. Positions 531–551 (ENRVEEEKKRQKEQAKLERTG) are enriched in basic and acidic residues. 2 disordered regions span residues 531-569 (ENRV…NQKQ) and 799-843 (AKSQ…DSHT). Over residues 553-568 (RTGSSEEAQLSGMNQK) the composition is skewed to polar residues.

It belongs to the DEAD box helicase family. DEAH subfamily. FANCM sub-subfamily. As to quaternary structure, interacts with the MHF histone-fold complex to form the FANCM-MHF complex.

It localises to the nucleus. It catalyses the reaction ATP + H2O = ADP + phosphate + H(+). Its function is as follows. ATP-dependent DNA helicase involved in DNA damage repair by homologous recombination and in genome maintenance. Capable of unwinding D-loops. Plays a role in limiting crossover recombinants during mitotic DNA double-strand break (DSB) repair. Component of a FANCM-MHF complex which promotes gene conversion at blocked replication forks, probably by reversal of the stalled fork. This chain is ATP-dependent DNA helicase MPH1, found in Kluyveromyces lactis (strain ATCC 8585 / CBS 2359 / DSM 70799 / NBRC 1267 / NRRL Y-1140 / WM37) (Yeast).